Reading from the N-terminus, the 286-residue chain is Single myb histone 5 (286 aa).

The HTH myb-type domain occupies 1–61 (MGAPKQRWTS…KWRNMNVIVT (61 aa)). The H-T-H motif DNA-binding region spans 28–57 (WRMILNDPELSSTLRYRSNVDLKDKWRNMN). An H15 domain is found at 122-190 (SHSRLDNIIM…KVNRKYRIAP (69 aa)). Residues 229-277 (EAAAAAAAHAVAEAEAIMAEAEAAAREAEAAEAEARAAQAFAEAAVLTL) are a coiled coil.

This sequence belongs to the histone H1/H5 family. SMH subfamily. In terms of assembly, forms a homodimer and heterodimers.

It is found in the nucleus. Its subcellular location is the chromosome. The protein resides in the nucleolus. It localises to the telomere. Binds preferentially double-stranded telomeric repeats, but may also bind to the single telomeric strand. The polypeptide is Single myb histone 5 (SMH5) (Zea mays (Maize)).